The following is a 222-amino-acid chain: Cytochrome b6-f complex iron-sulfur subunit, chloroplastic (222 aa).

The N-terminal 49 residues, 1 to 49 (MASTALSTASNPTQLCRTRASSLCKPVKGLGFGRERIPRNITCMAGSIS), are a transit peptide targeting the chloroplast. Residues 66–86 (LLGAISLPTFGMLVPYGSFLV) form a helical membrane-spanning segment. A Rieske domain is found at 109–205 (VEDWLKTHGP…ADVDDGKVVF (97 aa)). Cys-151, His-153, Cys-169, and His-172 together coordinate [2Fe-2S] cluster. A disulfide bond links Cys-156 and Cys-171.

Belongs to the Rieske iron-sulfur protein family. As to quaternary structure, the 4 large subunits of the cytochrome b6-f complex are cytochrome b6, subunit IV (17 kDa polypeptide, petD), cytochrome f and the Rieske protein, while the 4 small subunits are petG, petL, petM and petN. The complex functions as a dimer. Requires [2Fe-2S] cluster as cofactor.

The protein resides in the plastid. The protein localises to the chloroplast thylakoid membrane. It catalyses the reaction 2 oxidized [plastocyanin] + a plastoquinol + 2 H(+)(in) = 2 reduced [plastocyanin] + a plastoquinone + 4 H(+)(out). Functionally, component of the cytochrome b6-f complex, which mediates electron transfer between photosystem II (PSII) and photosystem I (PSI), cyclic electron flow around PSI, and state transitions. The sequence is that of Cytochrome b6-f complex iron-sulfur subunit, chloroplastic (petC) from Triticum aestivum (Wheat).